The primary structure comprises 263 residues: Imidazole glycerol phosphate synthase subunit HisF (263 aa).

Residues D11 and D131 contribute to the active site.

Belongs to the HisA/HisF family. In terms of assembly, heterodimer of HisH and HisF.

The protein localises to the cytoplasm. It carries out the reaction 5-[(5-phospho-1-deoxy-D-ribulos-1-ylimino)methylamino]-1-(5-phospho-beta-D-ribosyl)imidazole-4-carboxamide + L-glutamine = D-erythro-1-(imidazol-4-yl)glycerol 3-phosphate + 5-amino-1-(5-phospho-beta-D-ribosyl)imidazole-4-carboxamide + L-glutamate + H(+). It participates in amino-acid biosynthesis; L-histidine biosynthesis; L-histidine from 5-phospho-alpha-D-ribose 1-diphosphate: step 5/9. Its function is as follows. IGPS catalyzes the conversion of PRFAR and glutamine to IGP, AICAR and glutamate. The HisF subunit catalyzes the cyclization activity that produces IGP and AICAR from PRFAR using the ammonia provided by the HisH subunit. This Deinococcus geothermalis (strain DSM 11300 / CIP 105573 / AG-3a) protein is Imidazole glycerol phosphate synthase subunit HisF.